We begin with the raw amino-acid sequence, 1208 residues long: Calmodulin-binding transcription activator 2 (1208 aa).

The segment at residues 30–160 is a DNA-binding region (CG-1); the sequence is RCPLLPPERL…YLNVPALEDC (131 aa). Residues 78–86 carry the Nuclear localization signal motif; sequence NRKKVKYRK. 3 disordered regions span residues 269–328, 366–418, and 437–507; these read ISHS…SRGG, VGSE…PCPA, and QLGA…ELEP. The span at 275 to 288 shows a compositional bias: pro residues; the sequence is PEPPPLIAPLPPEL. Low complexity-rich tracts occupy residues 294–305 and 319–328; these read SPSSSSSSSSSS and TSRGGSSRGG. Pro residues-rich tracts occupy residues 371 to 380 and 464 to 476; these read SAPPAPPSPA and TVPP…PSSP. An IPT/TIG domain is found at 544 to 622; that stretch reads DFSPEWSYPE…LSASVLFEYR (79 aa). ANK repeat units follow at residues 717 to 750, 762 to 792, and 796 to 826; these read RGMS…SLDL, FSCT…ALSI, and LGRL…ELSV. 2 disordered regions span residues 826-881 and 908-936; these read VEHP…ASDI and NSKE…DSPP. A compositionally biased stretch (low complexity) spans 829–853; the sequence is PLALSPPSSSPDTGLSSASSPSELS. 2 consecutive IQ domains span residues 1054-1083 and 1107-1136; these read LYEA…AAAV and MTQA…AAVL. A disordered region spans residues 1144-1166; that stretch reads YRRRPGPPHRPSGPLPARNKGTF.

It belongs to the CAMTA family. As to quaternary structure, may interact with calmodulin.

Its subcellular location is the nucleus. Its function is as follows. Transcription activator. May act as tumor suppressor. The protein is Calmodulin-binding transcription activator 2 (Camta2) of Mus musculus (Mouse).